The primary structure comprises 156 residues: D-aminoacyl-tRNA deacylase (156 aa).

Positions 142 to 143 (GP) match the Gly-cisPro motif, important for rejection of L-amino acids motif.

Belongs to the DTD family. In terms of assembly, homodimer.

Its subcellular location is the cytoplasm. It carries out the reaction glycyl-tRNA(Ala) + H2O = tRNA(Ala) + glycine + H(+). The enzyme catalyses a D-aminoacyl-tRNA + H2O = a tRNA + a D-alpha-amino acid + H(+). Functionally, an aminoacyl-tRNA editing enzyme that deacylates mischarged D-aminoacyl-tRNAs. Also deacylates mischarged glycyl-tRNA(Ala), protecting cells against glycine mischarging by AlaRS. Acts via tRNA-based rather than protein-based catalysis; rejects L-amino acids rather than detecting D-amino acids in the active site. By recycling D-aminoacyl-tRNA to D-amino acids and free tRNA molecules, this enzyme counteracts the toxicity associated with the formation of D-aminoacyl-tRNA entities in vivo and helps enforce protein L-homochirality. The sequence is that of D-aminoacyl-tRNA deacylase from Cupriavidus metallidurans (strain ATCC 43123 / DSM 2839 / NBRC 102507 / CH34) (Ralstonia metallidurans).